Here is a 341-residue protein sequence, read N- to C-terminus: ATPase GET3 (341 aa).

ATP is bound at residue 34-41; the sequence is KGGVGKTT. Residue D63 is part of the active site. Positions 245 and 272 each coordinate ATP. Zn(2+) is bound by residues C283 and C286.

The protein belongs to the arsA ATPase family. As to quaternary structure, homodimer.

The protein localises to the cytoplasm. The protein resides in the endoplasmic reticulum. Functionally, ATPase required for the post-translational delivery of tail-anchored (TA) proteins to the endoplasmic reticulum. Recognizes and selectively binds the transmembrane domain of TA proteins in the cytosol. This complex then targets to the endoplasmic reticulum by membrane-bound receptors, where the tail-anchored protein is released for insertion. This process is regulated by ATP binding and hydrolysis. ATP binding drives the homodimer towards the closed dimer state, facilitating recognition of newly synthesized TA membrane proteins. ATP hydrolysis is required for insertion. Subsequently, the homodimer reverts towards the open dimer state, lowering its affinity for the membrane-bound receptor, and returning it to the cytosol to initiate a new round of targeting. The sequence is that of ATPase GET3 from Ajellomyces dermatitidis (strain ER-3 / ATCC MYA-2586) (Blastomyces dermatitidis).